The following is a 130-amino-acid chain: Flagellar assembly factor FliW (130 aa).

The protein belongs to the FliW family. Interacts with translational regulator CsrA and flagellin(s).

The protein resides in the cytoplasm. Functionally, acts as an anti-CsrA protein, binds CsrA and prevents it from repressing translation of its target genes, one of which is flagellin. Binds to flagellin and participates in the assembly of the flagellum. The polypeptide is Flagellar assembly factor FliW (Clostridioides difficile (strain 630) (Peptoclostridium difficile)).